The primary structure comprises 358 residues: DNA polymerase IV (358 aa).

Positions 4-185 (IIHIDMDCYF…LSLRKIPGVG (182 aa)) constitute a UmuC domain. Mg(2+) contacts are provided by Asp-8 and Asp-103. Glu-104 is an active-site residue.

This sequence belongs to the DNA polymerase type-Y family. As to quaternary structure, monomer. It depends on Mg(2+) as a cofactor.

The protein localises to the cytoplasm. It carries out the reaction DNA(n) + a 2'-deoxyribonucleoside 5'-triphosphate = DNA(n+1) + diphosphate. Functionally, poorly processive, error-prone DNA polymerase involved in untargeted mutagenesis. Copies undamaged DNA at stalled replication forks, which arise in vivo from mismatched or misaligned primer ends. These misaligned primers can be extended by PolIV. Exhibits no 3'-5' exonuclease (proofreading) activity. May be involved in translesional synthesis, in conjunction with the beta clamp from PolIII. This chain is DNA polymerase IV, found in Shewanella baltica (strain OS185).